We begin with the raw amino-acid sequence, 500 residues long: 4-alpha-glucanotransferase (500 aa).

It belongs to the disproportionating enzyme family.

It localises to the cytoplasm. It catalyses the reaction Transfers a segment of a (1-&gt;4)-alpha-D-glucan to a new position in an acceptor, which may be glucose or a (1-&gt;4)-alpha-D-glucan.. This is 4-alpha-glucanotransferase (malQ) from Thermus thermophilus.